The primary structure comprises 359 residues: Fe-S cluster assembly protein DRE2 (359 aa).

An N-terminal SAM-like domain region spans residues 1 to 159 (MANILLLLHP…LFKKLSSNSN (159 aa)). The interval 152–187 (KKLSSNSNNNNNSSSPIGLTDSSAANTDEETDEANV) is disordered. Over residues 155 to 166 (SSNSNNNNNSSS) the composition is skewed to low complexity. The linker stretch occupies residues 159–228 (NNNNNSSSPI…DDLIKDSNQL (70 aa)). A compositionally biased stretch (polar residues) spans 167–177 (PIGLTDSSAAN). C240, C252, C255, and C257 together coordinate [2Fe-2S] cluster. Residues 240–257 (CEIPNGKKRRKACKDCTC) form a fe-S binding site A region. Positions 322, 325, 333, and 336 each coordinate [4Fe-4S] cluster. 2 short sequence motifs (cx2C motif) span residues 322–325 (CGSC) and 333–336 (CDGC). Residues 322-336 (CGSCALGDAFRCDGC) form a fe-S binding site B region.

Belongs to the anamorsin family. In terms of assembly, monomer. Interacts with TAH18. Interacts with MIA40. The cofactor is [2Fe-2S] cluster. It depends on [4Fe-4S] cluster as a cofactor.

The protein localises to the cytoplasm. It is found in the mitochondrion intermembrane space. Component of the cytosolic iron-sulfur (Fe-S) protein assembly (CIA) machinery required for the maturation of extramitochondrial Fe-S proteins. Part of an electron transfer chain functioning in an early step of cytosolic Fe-S biogenesis, facilitating the de novo assembly of a [4Fe-4S] cluster on the scaffold complex CFD1-NBP35. Electrons are transferred to DRE2 from NADPH via the FAD- and FMN-containing protein TAH18. TAH18-DRE2 are also required for the assembly of the diferric tyrosyl radical cofactor of ribonucleotide reductase (RNR), probably by providing electrons for reduction during radical cofactor maturation in the catalytic small subunit RNR2. This chain is Fe-S cluster assembly protein DRE2, found in Scheffersomyces stipitis (strain ATCC 58785 / CBS 6054 / NBRC 10063 / NRRL Y-11545) (Yeast).